We begin with the raw amino-acid sequence, 133 residues long: Aspartate 1-decarboxylase (133 aa).

The active-site Schiff-base intermediate with substrate; via pyruvic acid is S26. S26 bears the Pyruvic acid (Ser) mark. Residue T58 coordinates substrate. Y59 acts as the Proton donor in catalysis. A substrate-binding site is contributed by 74–76 (GAA).

This sequence belongs to the PanD family. In terms of assembly, heterooctamer of four alpha and four beta subunits. The cofactor is pyruvate. Post-translationally, is synthesized initially as an inactive proenzyme, which is activated by self-cleavage at a specific serine bond to produce a beta-subunit with a hydroxyl group at its C-terminus and an alpha-subunit with a pyruvoyl group at its N-terminus.

It localises to the cytoplasm. The enzyme catalyses L-aspartate + H(+) = beta-alanine + CO2. The protein operates within cofactor biosynthesis; (R)-pantothenate biosynthesis; beta-alanine from L-aspartate: step 1/1. Catalyzes the pyruvoyl-dependent decarboxylation of aspartate to produce beta-alanine. The chain is Aspartate 1-decarboxylase from Legionella pneumophila (strain Paris).